We begin with the raw amino-acid sequence, 386 residues long: MNDTPENPHVPVGEKLQKVLARLGVGSRRDVEVWIAEGRVNVNGSVASLGQRVDSHDAITVDGHLIRREEAAESVRRVLIYNKPEGEVCTRDDPEGRPTIFDRLPRLRTGRWINVGRLDINTTGLLLFTTDGELANRLMHPSYEMDREYAVRVRGEVTEEMIERLLNGVMLEDGPAKFSDIQQAPGGEGFNHWYHCVVMEGRNREVRRLWESQGLVVSRLKRVRFGPVFLTSELTMGRYREMDQREIDILSEEVGLKPVALPGMTTKAREKAERQQRKQARPLARSERPEAGRKRAPRREDGENAARRAPASRPARGPQPSAERKGREQGTPVAERPRESNRKPRPSKPRDERPASAPGDKPAARKPQVKRRPKPAGDGMRPGFRR.

The 62-residue stretch at 14-75 (EKLQKVLARL…IRREEAAESV (62 aa)) folds into the S4 RNA-binding domain. Asp119 (nucleophile) is an active-site residue. A disordered region spans residues 260–386 (ALPGMTTKAR…GDGMRPGFRR (127 aa)). 2 stretches are compositionally biased toward basic and acidic residues: residues 267–276 (KAREKAERQQ) and 284–306 (ARSERPEAGRKRAPRREDGENAA). The span at 307–321 (RRAPASRPARGPQPS) shows a compositional bias: low complexity. The segment covering 335 to 354 (ERPRESNRKPRPSKPRDERP) has biased composition (basic and acidic residues).

Belongs to the pseudouridine synthase RsuA family.

The enzyme catalyses uridine(2605) in 23S rRNA = pseudouridine(2605) in 23S rRNA. In terms of biological role, responsible for synthesis of pseudouridine from uracil-2605 in 23S ribosomal RNA. In Pseudomonas aeruginosa (strain ATCC 15692 / DSM 22644 / CIP 104116 / JCM 14847 / LMG 12228 / 1C / PRS 101 / PAO1), this protein is Ribosomal large subunit pseudouridine synthase B (rluB).